Here is a 189-residue protein sequence, read N- to C-terminus: Thioredoxin-like protein CITRX, chloroplastic (189 aa).

The transit peptide at 1–56 (MAMAAAASLLPASAAPTLPGRAFRPPRNSTPTASLSCDGGSRCRGVGLGVILGGCR) directs the protein to the chloroplast. The Thioredoxin domain occupies 72–189 (GSGKYIAPDY…MIRNIIDNEL (118 aa)). Active-site nucleophile residues include Cys112 and Cys115. The cysteines at positions 112 and 115 are disulfide-linked.

This sequence belongs to the thioredoxin family. Plant CITRX-type subfamily.

The protein resides in the plastid. It localises to the chloroplast. Its function is as follows. Probable thiol-disulfide oxidoreductase that may play a role in proper chloroplast development. This chain is Thioredoxin-like protein CITRX, chloroplastic, found in Oryza sativa subsp. japonica (Rice).